We begin with the raw amino-acid sequence, 504 residues long: Maturase K (504 aa).

It belongs to the intron maturase 2 family. MatK subfamily.

It is found in the plastid. It localises to the chloroplast. In terms of biological role, usually encoded in the trnK tRNA gene intron. Probably assists in splicing its own and other chloroplast group II introns. This is Maturase K from Hamamelis mollis (Chinese witch hazel).